An 871-amino-acid polypeptide reads, in one-letter code: Probable inorganic carbon transporter subunit DabA (871 aa).

Residues Cys396, Asp398, His577, and Cys592 each coordinate Zn(2+).

Belongs to the inorganic carbon transporter (TC 9.A.2) DabA family. As to quaternary structure, forms a complex with DabB. The cofactor is Zn(2+).

The protein resides in the cell membrane. Functionally, part of an energy-coupled inorganic carbon pump. This is Probable inorganic carbon transporter subunit DabA from Bacillus subtilis (strain 168).